Consider the following 375-residue polypeptide: MQCALYDAGRCRSCQWITQSVNEQLSAKTADLHRLLAGLPVEQWCAPTGGPEQRFRNKAKMVVSGSVEKPLFGMLHRDGTPVDLCGCPLYPASFAPVFSALKPFIARAGLTPYNVARKRGELKYLLLTESQFDGGMMLRFVLRSETKLTQLRAALPWLRAQLPQLKVITANIQPVHMAIMEGETEIYLTDQQALAERFNDVPLWIRPQSFFQTNPTVASRLYATARDWVGQLPVRHMWDLFCGVGGFGLHCATPQMQLTGIEIAPEAIACAKQSAAELGLTRLHFQALDSTQFATAQGETPDLVLVNPPRRGIGKPLCDYLAQMAPRFIIYSSCNAQTMAQDIRHLPNYRIQRVQLFDMFPHTAHYEVLTLLCRL.

Cysteine 3, cysteine 11, cysteine 14, and cysteine 87 together coordinate [4Fe-4S] cluster. S-adenosyl-L-methionine-binding residues include glutamine 212, phenylalanine 241, glutamate 262, and asparagine 307. The active-site Nucleophile is the cysteine 334.

It belongs to the class I-like SAM-binding methyltransferase superfamily. RNA M5U methyltransferase family. RlmC subfamily.

It carries out the reaction uridine(747) in 23S rRNA + S-adenosyl-L-methionine = 5-methyluridine(747) in 23S rRNA + S-adenosyl-L-homocysteine + H(+). Its function is as follows. Catalyzes the formation of 5-methyl-uridine at position 747 (m5U747) in 23S rRNA. The chain is 23S rRNA (uracil(747)-C(5))-methyltransferase RlmC from Salmonella agona (strain SL483).